Reading from the N-terminus, the 284-residue chain is 2-dehydro-3-deoxyphosphooctonate aldolase (284 aa).

The protein belongs to the KdsA family.

Its subcellular location is the cytoplasm. It catalyses the reaction D-arabinose 5-phosphate + phosphoenolpyruvate + H2O = 3-deoxy-alpha-D-manno-2-octulosonate-8-phosphate + phosphate. It functions in the pathway carbohydrate biosynthesis; 3-deoxy-D-manno-octulosonate biosynthesis; 3-deoxy-D-manno-octulosonate from D-ribulose 5-phosphate: step 2/3. It participates in bacterial outer membrane biogenesis; lipopolysaccharide biosynthesis. The chain is 2-dehydro-3-deoxyphosphooctonate aldolase from Escherichia coli O6:K15:H31 (strain 536 / UPEC).